Reading from the N-terminus, the 220-residue chain is Glycerol-3-phosphate acyltransferase (220 aa).

A run of 6 helical transmembrane segments spans residues 11–31 (INVI…GYAL), 70–90 (LLVL…SKLF), 96–116 (LQWM…FLNF), 127–147 (GSVV…WFFV), 153–173 (ISSL…FFVP), and 193–213 (MVLI…NLLA).

It belongs to the PlsY family. In terms of assembly, probably interacts with PlsX.

The protein localises to the cell inner membrane. The enzyme catalyses an acyl phosphate + sn-glycerol 3-phosphate = a 1-acyl-sn-glycero-3-phosphate + phosphate. The protein operates within lipid metabolism; phospholipid metabolism. Catalyzes the transfer of an acyl group from acyl-phosphate (acyl-PO(4)) to glycerol-3-phosphate (G3P) to form lysophosphatidic acid (LPA). This enzyme utilizes acyl-phosphate as fatty acyl donor, but not acyl-CoA or acyl-ACP. The protein is Glycerol-3-phosphate acyltransferase of Helicobacter pylori (strain HPAG1).